A 360-amino-acid chain; its full sequence is Codeine O-demethylase (360 aa).

Residues 211-311 form the Fe2OG dioxygenase domain; sequence GLQTMRMNYY…RLSIATFHDS (101 aa). Tyrosine 220 contributes to the 2-oxoglutarate binding site. Histidine 235, aspartate 237, and histidine 292 together coordinate Fe cation. Positions 302 and 304 each coordinate 2-oxoglutarate.

It belongs to the iron/ascorbate-dependent oxidoreductase family. L-ascorbate is required as a cofactor. Fe cation serves as cofactor. In terms of tissue distribution, mainly expressed in stems, capsules and leaves and, to a lower extent, in roots.

It catalyses the reaction codeine + 2-oxoglutarate + O2 = morphine + formaldehyde + succinate + CO2. It carries out the reaction thebaine + 2-oxoglutarate + O2 = oripavine + formaldehyde + succinate + CO2. The catalysed reaction is (S)-scoulerine + 2-oxoglutarate + O2 = (S)-3-O-demethylscoulerine + formaldehyde + succinate + CO2. The enzyme catalyses thebaine + 2-oxoglutarate + O2 = neopinone + formaldehyde + succinate + CO2. It catalyses the reaction (S)-reticuline + 2-oxoglutarate + O2 = (S)-6-O-demethylreticuline + formaldehyde + succinate + CO2. It carries out the reaction (S)-tetrahydropalmatine + S-adenosyl-L-methionine = (S)-cis-N-methyltetrahydropalmatine + S-adenosyl-L-homocysteine. It participates in alkaloid biosynthesis; morphine biosynthesis. With respect to regulation, moderate substrate inhibition. Not inhibited in vitro by acylcyclohexanediones. Functionally, non-heme dioxygenase involved in biosynthesis of morphinan-type benzylisoquinoline and opiate alkaloids natural products. Mediates the conversion of codeine to morphine. Also catalyzes, with lower efficiency, the 3-O-demethylation of thebaine to oripavine and of (S)-scoulerine to 3-O-demethylscoulerine. Supports, with a lower turnover, the conversion of codeinone to morphinone, of thebaine to neopinone, and of neopine to neomorphine. Supports dealkylation reactions such as O,O-demethylenation in the metabolism of protopine, benzo[c]phenanthridine, and rhoeadine alkaloids; cleaves a methylenedioxy bridge leaving two hydroxyl groups. Catalyzes the O,O-demethylenation of methylenedioxy bridges on protopine alkaloids such as allocryptopine, cryptopine and protopine. No activity with (S)-reticuline, salutaridine, papaverine, (S)-corytuberine, oripavine, pavine or noscapine. In Papaver somniferum (Opium poppy), this protein is Codeine O-demethylase.